The primary structure comprises 448 residues: Tryptophan--tRNA ligase (448 aa).

ATP is bound by residues 10–12 (TPT) and 18–19 (GN). The short motif at 11 to 19 (PTGTPHLGN) is the 'HIGH' region element. D143 contributes to the L-tryptophan binding site. ATP contacts are provided by residues 155–157 (GRD), L197, and 204–208 (KMSKS). The 'KMSKS' region motif lies at 204–208 (KMSKS).

It belongs to the class-I aminoacyl-tRNA synthetase family. Homodimer.

Its subcellular location is the cytoplasm. It carries out the reaction tRNA(Trp) + L-tryptophan + ATP = L-tryptophyl-tRNA(Trp) + AMP + diphosphate + H(+). Its function is as follows. Catalyzes the attachment of tryptophan to tRNA(Trp). The chain is Tryptophan--tRNA ligase from Pseudomonas aeruginosa (strain ATCC 15692 / DSM 22644 / CIP 104116 / JCM 14847 / LMG 12228 / 1C / PRS 101 / PAO1).